We begin with the raw amino-acid sequence, 335 residues long: MGKLDVIQAKGTERLKRGFAKMVKGGVIMDVTNAEQARIAEEAGAVSVMALHRVPADIRKAGGVARMAPIEKIQEIMDAVTIPVMAKVRIGHVAEAKILEALGVDMIDESEVLTPSDPFFHIDKREFTVPFVCGARNLGEAVRRIWEGAAMIRTKGEAGTGNIVEAVRHVRLVAEGIRQIQAMTDDQVYAVAEKFAEPYLRLSLNVKEIAGLPQRVLDNEPIYGHYTYREIVDGLYKILLEIKKLGRLPVVNFAAGGVATPADAALMMQMGMDGVFVGSGIFKSSNPPKMAKAIVEAVNHWDEPDVLVEISKEIGEPMRGQDIEELEVRLEERGV.

D30 provides a ligand contact to D-ribose 5-phosphate. The active-site Schiff-base intermediate with D-ribose 5-phosphate is the K87. Residue G159 coordinates D-ribose 5-phosphate. D-glyceraldehyde 3-phosphate is bound at residue R171. D-ribose 5-phosphate is bound by residues G257 and 278–279 (GS).

Belongs to the PdxS/SNZ family. In the presence of PdxT, forms a dodecamer of heterodimers.

The catalysed reaction is aldehydo-D-ribose 5-phosphate + D-glyceraldehyde 3-phosphate + L-glutamine = pyridoxal 5'-phosphate + L-glutamate + phosphate + 3 H2O + H(+). It participates in cofactor biosynthesis; pyridoxal 5'-phosphate biosynthesis. Its function is as follows. Catalyzes the formation of pyridoxal 5'-phosphate from ribose 5-phosphate (RBP), glyceraldehyde 3-phosphate (G3P) and ammonia. The ammonia is provided by the PdxT subunit. Can also use ribulose 5-phosphate and dihydroxyacetone phosphate as substrates, resulting from enzyme-catalyzed isomerization of RBP and G3P, respectively. In Thermococcus kodakarensis (strain ATCC BAA-918 / JCM 12380 / KOD1) (Pyrococcus kodakaraensis (strain KOD1)), this protein is Pyridoxal 5'-phosphate synthase subunit PdxS.